The chain runs to 286 residues: Ribosome maturation factor RimP (286 aa).

A compositionally biased stretch (acidic residues) spans 200–224 (LDGEDGDDTGVDAGDPDQDDADDAL). Positions 200-286 (LDGEDGDDTG…ANASTVKETH (87 aa)) are disordered. Residues 248–267 (VGRKAKGKKASPKKSNAKKK) show a composition bias toward basic residues. Positions 273–286 (AASSANASTVKETH) are enriched in polar residues.

It belongs to the RimP family.

It localises to the cytoplasm. Its function is as follows. Required for maturation of 30S ribosomal subunits. This is Ribosome maturation factor RimP from Xanthobacter autotrophicus (strain ATCC BAA-1158 / Py2).